The chain runs to 465 residues: MAP kinase-interacting serine/threonine-protein kinase 2 (465 aa).

Positions 23–72 (ELAFSLDQPDHGDSDFGLQCSARPDMPASQPIDIPDAKKRGKKKKRGRAT) are disordered. A Nuclear localization signal motif is present at residues 60–66 (KKRGKKK). A Phosphoserine modification is found at serine 74. The 305-residue stretch at 84 to 388 (QLQEDVLGEG…TPMVLQRNSC (305 aa)) folds into the Protein kinase domain. Residues 90-98 (LGEGAHARV) and lysine 113 each bind ATP. 160–162 (EKM) is a staurosporine binding site. Aspartate 205 (proton acceptor) is an active-site residue. A staurosporine-binding site is contributed by glutamate 209. Residues threonine 244 and threonine 249 each carry the phosphothreonine modification. The Zn(2+) site is built by cysteine 299, cysteine 311, and cysteine 314. Position 379 is a phosphothreonine (threonine 379). Phosphoserine is present on residues serine 437 and serine 440. Residues 444–448 (LAQRR) carry the MAP kinase binding motif. Residue serine 452 is modified to Phosphoserine.

The protein belongs to the protein kinase superfamily. CAMK Ser/Thr protein kinase family. In terms of assembly, monomer. Interacts with the C-terminal regions of EIF4G1 and EIF4G2; this interaction is promoted when MAPK pathways are repressed but repressed upon ERK proteins activation. Also binds to dephosphorylated MAPK3/ERK1 and MAPK1/ERK2. Isoform 1 interaction with phosphorylated MAPK3/ERK1 and MAPK1/ERK2 protects it from dephosphorylation and inactivation. Isoform 2 interacts with ESR2 and EIF4E in the nucleus. Mg(2+) is required as a cofactor. It depends on Zn(2+) as a cofactor. In terms of processing, dual phosphorylation of Thr-244 and Thr-249 activates the kinase. Phosphorylation of Thr-379 activates the kinase. Phosphorylated upon arsenic trioxide As(2)O(3) treatment. Phosphorylated by MAPK1/ERK2, MAPK11 and MAPK14. Dephosphorylated by PP2A. In terms of tissue distribution, ubiquitously expressed in all tissues examined. Isoform 2 is expressed at higher levels in the ovary than is isoform 1.

It localises to the nucleus. The protein resides in the PML body. It is found in the cytoplasm. The enzyme catalyses L-seryl-[protein] + ATP = O-phospho-L-seryl-[protein] + ADP + H(+). It carries out the reaction L-threonyl-[protein] + ATP = O-phospho-L-threonyl-[protein] + ADP + H(+). With respect to regulation, inhibited by CGP57380 and staurosporine. Activated by phosphorylation in a negative-feedback regulatory manner in response to chemotherapy (e.g. cytarabine) and thus impairs the generation of antileukemic responses. Serine/threonine-protein kinase that phosphorylates SFPQ/PSF, HNRNPA1 and EIF4E. May play a role in the response to environmental stress and cytokines. Appears to regulate translation by phosphorylating EIF4E, thus increasing the affinity of this protein for the 7-methylguanosine-containing mRNA cap. Required for mediating PP2A-inhibition-induced EIF4E phosphorylation. Triggers EIF4E shuttling from cytoplasm to nucleus. Isoform 1 displays a high basal kinase activity, but isoform 2 exhibits a very low kinase activity. Acts as a mediator of the suppressive effects of IFNgamma on hematopoiesis. Negative regulator for signals that control generation of arsenic trioxide As(2)O(3)-dependent apoptosis and anti-leukemic responses. Involved in anti-apoptotic signaling in response to serum withdrawal. In Homo sapiens (Human), this protein is MAP kinase-interacting serine/threonine-protein kinase 2 (MKNK2).